Consider the following 150-residue polypeptide: 3-hydroxyacyl-[acyl-carrier-protein] dehydratase FabZ (150 aa).

Residue H54 is part of the active site.

The protein belongs to the thioester dehydratase family. FabZ subfamily.

It localises to the cytoplasm. It carries out the reaction a (3R)-hydroxyacyl-[ACP] = a (2E)-enoyl-[ACP] + H2O. Its function is as follows. Involved in unsaturated fatty acids biosynthesis. Catalyzes the dehydration of short chain beta-hydroxyacyl-ACPs and long chain saturated and unsaturated beta-hydroxyacyl-ACPs. The chain is 3-hydroxyacyl-[acyl-carrier-protein] dehydratase FabZ from Aliivibrio fischeri (strain ATCC 700601 / ES114) (Vibrio fischeri).